The following is a 61-amino-acid chain: Small ribosomal subunit protein uS14 (61 aa).

Zn(2+) is bound by residues Cys-24, Cys-27, Cys-40, and Cys-43.

Belongs to the universal ribosomal protein uS14 family. Zinc-binding uS14 subfamily. Part of the 30S ribosomal subunit. Contacts proteins S3 and S10. Requires Zn(2+) as cofactor.

Functionally, binds 16S rRNA, required for the assembly of 30S particles and may also be responsible for determining the conformation of the 16S rRNA at the A site. This chain is Small ribosomal subunit protein uS14, found in Campylobacter concisus (strain 13826).